A 101-amino-acid polypeptide reads, in one-letter code: Large ribosomal subunit protein uL24 (101 aa).

Belongs to the universal ribosomal protein uL24 family. In terms of assembly, part of the 50S ribosomal subunit.

Its function is as follows. One of two assembly initiator proteins, it binds directly to the 5'-end of the 23S rRNA, where it nucleates assembly of the 50S subunit. Functionally, one of the proteins that surrounds the polypeptide exit tunnel on the outside of the subunit. This is Large ribosomal subunit protein uL24 from Streptococcus pneumoniae (strain ATCC 700669 / Spain 23F-1).